Here is a 624-residue protein sequence, read N- to C-terminus: Methyl-accepting chemotaxis protein McpG (624 aa).

A helical membrane pass occupies residues 11-31 (ILLAASLIVILAFSLFTLYND). The Cache domain occupies 36–254 (NAIREDLENY…GLPSANWYIG (219 aa)). Residues 272–292 (SAVIATVVAVVIIIGLLGLLI) form a helical membrane-spanning segment. Positions 293 to 347 (RVLMQPLHTMTRAMEDIAEGEGDLTKRLHIHSHDEFGVLGNAFNRFVERIHSSIR) constitute an HAMP domain. The 237-residue stretch at 352 to 588 (ATEQVNEVAL…AINMDINEIN (237 aa)) folds into the Methyl-accepting transducer domain.

This sequence belongs to the methyl-accepting chemotaxis (MCP) protein family.

The protein resides in the cell membrane. Its function is as follows. Chemotactic-signal transducers respond to changes in the concentration of attractants and repellents in the environment, transduce a signal from the outside to the inside of the cell, and facilitate sensory adaptation through the variation of the level of methylation. McpG is a specific gamma-aminobutyric acid (GABA) chemoreceptor that recognizes GABA over a wide range of environmental conditions. Contributes to attraction to and colonization of plant roots. The polypeptide is Methyl-accepting chemotaxis protein McpG (Pseudomonas putida (strain ATCC 47054 / DSM 6125 / CFBP 8728 / NCIMB 11950 / KT2440)).